The sequence spans 833 residues: pre-rRNA 2'-O-ribose RNA methyltransferase (833 aa).

Positions 57, 59, 77, 93, and 118 each coordinate S-adenosyl-L-methionine. Lys158 acts as the Proton acceptor in catalysis. Disordered stretches follow at residues 323-349 (KLDN…MEEN), 363-453 (KKKR…DEYL), 475-640 (LDDV…SDED), 730-767 (LGKK…SGTD), and 779-833 (IAKK…KNKK). A coiled-coil region spans residues 336 to 386 (EEKKELTAEEMEENLQEEMKEYLALVEKKKRKEKKRQNELKRKHQRKIELT). The segment covering 363-381 (KKKRKEKKRQNELKRKHQR) has biased composition (basic residues). A compositionally biased stretch (basic and acidic residues) spans 382 to 396 (KIELTMHIPGDKIEE). Acidic residues predominate over residues 423-441 (SSDEFDSDDSDDDDDDDNN). Residues 455 to 485 (QQLDEQYKLYQQRIRKKAAKLDDVKVKKDKI) are a coiled coil. Positions 475 to 486 (LDDVKVKKDKIG) are enriched in basic and acidic residues. Acidic residues-rich tracts occupy residues 490 to 503 (YNED…EQEE) and 542 to 556 (SESE…DQDD). A compositionally biased stretch (basic and acidic residues) spans 557-566 (ENNKPIDISK). Composition is skewed to acidic residues over residues 605–614 (DKDDQDDDDD) and 626–640 (PVQE…SDED). 3 stretches are compositionally biased toward basic and acidic residues: residues 732 to 741 (KKMEKTRDKA), 751 to 767 (SNRE…SGTD), and 794 to 806 (KIVD…DLRA).

This sequence belongs to the class I-like SAM-binding methyltransferase superfamily. RNA methyltransferase RlmE family. SPB1 subfamily.

Its subcellular location is the nucleus. It is found in the nucleolus. The catalysed reaction is a ribonucleotide in rRNA + S-adenosyl-L-methionine = a 2'-O-methylribonucleotide in rRNA + S-adenosyl-L-homocysteine + H(+). In terms of biological role, RNA 2'-O-methyltransferase involved in the maturation of rRNA and in the biogenesis of ribosomal subunits. The sequence is that of pre-rRNA 2'-O-ribose RNA methyltransferase (fsjC) from Dictyostelium discoideum (Social amoeba).